A 579-amino-acid chain; its full sequence is MINGEQTMVEDELPDQGKPMSDESADIDIKDLKVGESIGSGAYGIVYRGTLFNSDVAIKKIQNEKSEKNEFIKYLKREVAVLKNIQHPNIVQFIGVYYEPLASPSLVNRLLNSSSTWIVTEYIGGGNLHERIKDTKKDFPIELRIKLSLDIALAMAYLHSRDIIFRDLKSKNILIDDSSSPIRGKVCDFGFARILNKKQQGNRHLSICGTDSIMAPELILGMEYDESVDIFSFGVVLLEMILRKKVSKVLERGPQSAFEIDQDSARQLIPDDIPVLYSDLALDCIKYQPEERPNFSHIIHVLKQLTSLFPVVHTFDNPLSPTSSPITPRKNSLNSPFTKSMRMNSFDFNLSNIVSSTSVQNNLKSQNLNFTLLNLNQINNQDLNENNNNNISNNINNINNNNNNLNDCNSNLSSSTSTIYNDSQQTIIDEDELDKEEEENRNKVNNLKEKMLLVMGEFDIYINKVGKELLLVSEEDHISQKYDECRKVIEIKKVLGEVIESDMSNSQQSNTPRKNSNVTNSRVALFLKSMERSLNEIYSSSDVLKQRIVKEDDLVESLLLARVVSKIKKIHLSSLDINN.

Residues 1–24 (MINGEQTMVEDELPDQGKPMSDES) are disordered. Residues 32 to 309 (LKVGESIGSG…HVLKQLTSLF (278 aa)) form the Protein kinase domain. ATP contacts are provided by residues 38 to 46 (IGSGAYGIV) and Lys-59. The Proton acceptor role is filled by Asp-167.

Belongs to the protein kinase superfamily. TKL Ser/Thr protein kinase family.

The enzyme catalyses L-seryl-[protein] + ATP = O-phospho-L-seryl-[protein] + ADP + H(+). It catalyses the reaction L-threonyl-[protein] + ATP = O-phospho-L-threonyl-[protein] + ADP + H(+). This Dictyostelium discoideum (Social amoeba) protein is Probable serine/threonine-protein kinase kinY (kinY).